Here is a 229-residue protein sequence, read N- to C-terminus: UPF0758 protein MA_1979 (229 aa).

The region spanning 106-228 is the MPN domain; that stretch reads KICSPKDVYA…YVSLKDEGFV (123 aa). Positions 177, 179, and 190 each coordinate Zn(2+). The short motif at 177–190 is the JAMM motif element; it reads HNHPSGDPSPSRED.

This sequence belongs to the UPF0758 family.

The polypeptide is UPF0758 protein MA_1979 (Methanosarcina acetivorans (strain ATCC 35395 / DSM 2834 / JCM 12185 / C2A)).